We begin with the raw amino-acid sequence, 815 residues long: Chromatin assembly factor 1 subunit FAS1 (815 aa).

Disordered stretches follow at residues 1-39 (MDEV…TSEE), 292-330 (NNKE…KKQL), 434-477 (KLST…KKSR), 502-577 (QVVK…EGVQ), and 791-815 (RCLP…NENA). Basic and acidic residues-rich tracts occupy residues 10–21 (NENRKTMIEPKK) and 292–328 (NNKE…ELKK). Residues 244 to 336 (EEKLLLKQLE…KKQLQVQKQA (93 aa)) are a coiled coil. Acidic residues-rich tracts occupy residues 516–532 (LDYE…EEAG) and 554–576 (DDED…DEGV). Residues 806 to 815 (AAERLENENA) show a composition bias toward basic and acidic residues.

The protein belongs to the CHAF1A family. As to quaternary structure, component of the chromatin assembly factor 1 (CAF-1) complex, composed of FAS1, FAS2 and MSI1. Interacts with CYP71. Expressed in the shoot apical meristem, young leaf primordia, root tip and first lateral root primordium at the hypocotyl/root junction.

It is found in the nucleus. Its function is as follows. Component of the chromatin assembly factor complex (CAF-1) involved in chromatin assembly following DNA replication and DNA repair. Assembles histone octamers onto replicating DNA in vitro. Required for several aspects of development, including seedling growth and leaf hair differentiation. Plays a critical role in the organization of shoot apical meristem (SAM) and root apical meristem (RAM) during postembryonic development by facilitating stable maintenance of gene expression states. Seems not required to maintain transcriptional repression of heterochromatic genes. Involved in heterologous recombination. May repress endocycle. In Arabidopsis thaliana (Mouse-ear cress), this protein is Chromatin assembly factor 1 subunit FAS1 (FAS1).